Here is a 234-residue protein sequence, read N- to C-terminus: Lipoprotein-releasing system ATP-binding protein LolD (234 aa).

The 221-residue stretch at Ile13–Leu233 folds into the ABC transporter domain. Ala49–Ser56 lines the ATP pocket.

This sequence belongs to the ABC transporter superfamily. Lipoprotein translocase (TC 3.A.1.125) family. As to quaternary structure, the complex is composed of two ATP-binding proteins (LolD) and two transmembrane proteins (LolC and LolE).

Its subcellular location is the cell inner membrane. Part of the ABC transporter complex LolCDE involved in the translocation of mature outer membrane-directed lipoproteins, from the inner membrane to the periplasmic chaperone, LolA. Responsible for the formation of the LolA-lipoprotein complex in an ATP-dependent manner. This Bradyrhizobium diazoefficiens (strain JCM 10833 / BCRC 13528 / IAM 13628 / NBRC 14792 / USDA 110) protein is Lipoprotein-releasing system ATP-binding protein LolD.